We begin with the raw amino-acid sequence, 388 residues long: Leucine aminopeptidase 1 (388 aa).

Residues 1–19 form the signal peptide; the sequence is MKLPALLILGVAASTMVLA. Residues 20–88 constitute a propeptide that is removed on maturation; the sequence is AIAPDQVPLN…LPKVFPTPAV (69 aa). N-linked (GlcNAc...) asparagine glycans are attached at residues asparagine 96, asparagine 119, asparagine 149, asparagine 164, and asparagine 181. 2 residues coordinate Zn(2+): histidine 189 and aspartate 207. A glycan (N-linked (GlcNAc...) asparagine) is linked at asparagine 232. Zn(2+) contacts are provided by glutamate 246 and aspartate 273. Cysteine 322 and cysteine 326 are disulfide-bonded. Histidine 355 contacts Zn(2+).

It belongs to the peptidase M28 family. M28E subfamily. In terms of assembly, monomer. Requires Zn(2+) as cofactor.

Its subcellular location is the secreted. In terms of biological role, extracellular aminopeptidase that allows assimilation of proteinaceous substrates. This is Leucine aminopeptidase 1 (LAP1) from Paracoccidioides brasiliensis (strain Pb03).